Reading from the N-terminus, the 93-residue chain is Phosphoribosyl-ATP pyrophosphatase (93 aa).

Belongs to the PRA-PH family.

It is found in the cytoplasm. The catalysed reaction is 1-(5-phospho-beta-D-ribosyl)-ATP + H2O = 1-(5-phospho-beta-D-ribosyl)-5'-AMP + diphosphate + H(+). Its pathway is amino-acid biosynthesis; L-histidine biosynthesis; L-histidine from 5-phospho-alpha-D-ribose 1-diphosphate: step 2/9. This Mycobacterium bovis (strain ATCC BAA-935 / AF2122/97) protein is Phosphoribosyl-ATP pyrophosphatase (hisE).